A 574-amino-acid polypeptide reads, in one-letter code: Type II methyltransferase M.PaeR7I (574 aa).

The protein belongs to the N(4)/N(6)-methyltransferase family. In terms of assembly, monomer.

The enzyme catalyses a 2'-deoxyadenosine in DNA + S-adenosyl-L-methionine = an N(6)-methyl-2'-deoxyadenosine in DNA + S-adenosyl-L-homocysteine + H(+). Functionally, a gamma subtype methylase, recognizes the double-stranded sequence 5'-CTCGAG-3', methylates A-5 on both strands, and protects the DNA from cleavage by the PaeR7I endonuclease. This chain is Type II methyltransferase M.PaeR7I (paeR7IM), found in Pseudomonas aeruginosa.